The primary structure comprises 457 residues: Flavohemoprotein-2 (457 aa).

Residues 2–157 (ALSEDTIKAV…LADLLIKREE (156 aa)) form the Globin domain. His106 contributes to the heme b binding site. Active-site charge relay system residues include Tyr116 and Glu156. The segment at 168–456 (GGWRQTRTFR…FEMFGPFKAS (289 aa)) is reductase. The region spanning 171 to 278 (RQTRTFRVEE…APPYGDFFLR (108 aa)) is the FAD-binding FR-type domain. FAD-binding positions include Tyr210 and 227 to 230 (RQYS). Position 320–325 (320–325 (GIGQTP)) interacts with NADP(+). 449-452 (MFGP) lines the FAD pocket.

Belongs to the globin family. Two-domain flavohemoproteins subfamily. This sequence in the C-terminal section; belongs to the flavoprotein pyridine nucleotide cytochrome reductase family. Monomer. The cofactor is heme b. FAD is required as a cofactor.

It carries out the reaction 2 nitric oxide + NADPH + 2 O2 = 2 nitrate + NADP(+) + H(+). The catalysed reaction is 2 nitric oxide + NADH + 2 O2 = 2 nitrate + NAD(+) + H(+). Its function is as follows. Flavohemoprotein involved in nitric oxide (NO) detoxification in an aerobic process, termed nitric oxide dioxygenase (NOD) reaction that utilizes O(2) and NAD(P)H to convert NO to nitrate, which protects the protozoan parasite from various noxious nitrogen compounds. Therefore, plays a central role in the inducible response to nitrosative stress. May also be involved in O(2) detoxification. The polypeptide is Flavohemoprotein-2 (hmpA-2) (Giardia intestinalis (strain P15) (Giardia lamblia)).